A 118-amino-acid polypeptide reads, in one-letter code: Large ribosomal subunit protein uL22 (118 aa).

This sequence belongs to the universal ribosomal protein uL22 family. Part of the 50S ribosomal subunit.

In terms of biological role, this protein binds specifically to 23S rRNA; its binding is stimulated by other ribosomal proteins, e.g. L4, L17, and L20. It is important during the early stages of 50S assembly. It makes multiple contacts with different domains of the 23S rRNA in the assembled 50S subunit and ribosome. Its function is as follows. The globular domain of the protein is located near the polypeptide exit tunnel on the outside of the subunit, while an extended beta-hairpin is found that lines the wall of the exit tunnel in the center of the 70S ribosome. The chain is Large ribosomal subunit protein uL22 from Leuconostoc mesenteroides subsp. mesenteroides (strain ATCC 8293 / DSM 20343 / BCRC 11652 / CCM 1803 / JCM 6124 / NCDO 523 / NBRC 100496 / NCIMB 8023 / NCTC 12954 / NRRL B-1118 / 37Y).